The chain runs to 404 residues: Cysteine desulfurase IscS (404 aa).

Residues 75–76 (AT), Asn155, Gln183, and 203–205 (SAH) each bind pyridoxal 5'-phosphate. Position 206 is an N6-(pyridoxal phosphate)lysine (Lys206). Thr243 serves as a coordination point for pyridoxal 5'-phosphate. Residue Cys328 is the Cysteine persulfide intermediate of the active site. [2Fe-2S] cluster is bound at residue Cys328.

The protein belongs to the class-V pyridoxal-phosphate-dependent aminotransferase family. NifS/IscS subfamily. Homodimer. Forms a heterotetramer with IscU, interacts with other sulfur acceptors. Pyridoxal 5'-phosphate serves as cofactor.

Its subcellular location is the cytoplasm. It catalyses the reaction (sulfur carrier)-H + L-cysteine = (sulfur carrier)-SH + L-alanine. It participates in cofactor biosynthesis; iron-sulfur cluster biosynthesis. In terms of biological role, master enzyme that delivers sulfur to a number of partners involved in Fe-S cluster assembly, tRNA modification or cofactor biosynthesis. Catalyzes the removal of elemental sulfur atoms from cysteine to produce alanine. Functions as a sulfur delivery protein for Fe-S cluster synthesis onto IscU, an Fe-S scaffold assembly protein, as well as other S acceptor proteins. In Vibrio vulnificus (strain CMCP6), this protein is Cysteine desulfurase IscS.